The primary structure comprises 1481 residues: Chromosome partition protein MukB (1481 aa).

34-41 (GGNGAGKS) serves as a coordination point for ATP. Coiled coils occupy residues 338–480 (SLVQ…QAYQ), 509–604 (QHLA…APVW), 780–805 (RAARENRLEALYQERDSLAERYATLS), 835–1116 (EAEI…AKAG), and 1210–1265 (EAIE…LQAV). Residues 666–783 (PSGAEDSRMI…EVPLFGRAAR (118 aa)) are flexible hinge.

This sequence belongs to the SMC family. MukB subfamily. In terms of assembly, homodimerization via its hinge domain. Binds to DNA via its C-terminal region. Interacts, and probably forms a ternary complex, with MukE and MukF via its C-terminal region. The complex formation is stimulated by calcium or magnesium. Interacts with tubulin-related protein FtsZ.

It is found in the cytoplasm. The protein localises to the nucleoid. Its function is as follows. Plays a central role in chromosome condensation, segregation and cell cycle progression. Functions as a homodimer, which is essential for chromosome partition. Involved in negative DNA supercoiling in vivo, and by this means organize and compact chromosomes. May achieve or facilitate chromosome segregation by condensation DNA from both sides of a centrally located replisome during cell division. This is Chromosome partition protein MukB from Yersinia enterocolitica serotype O:8 / biotype 1B (strain NCTC 13174 / 8081).